Here is a 179-residue protein sequence, read N- to C-terminus: ATP synthase subunit b (179 aa).

Residues 26–46 (FLEANLFNLAILLGIIIYYAP) traverse the membrane as a helical segment.

The protein belongs to the ATPase B chain family. In terms of assembly, F-type ATPases have 2 components, F(1) - the catalytic core - and F(0) - the membrane proton channel. F(1) has five subunits: alpha(3), beta(3), gamma(1), delta(1), epsilon(1). F(0) has four main subunits: a(1), b(1), b'(1) and c(10-14). The alpha and beta chains form an alternating ring which encloses part of the gamma chain. F(1) is attached to F(0) by a central stalk formed by the gamma and epsilon chains, while a peripheral stalk is formed by the delta, b and b' chains.

The protein localises to the cellular thylakoid membrane. Functionally, f(1)F(0) ATP synthase produces ATP from ADP in the presence of a proton or sodium gradient. F-type ATPases consist of two structural domains, F(1) containing the extramembraneous catalytic core and F(0) containing the membrane proton channel, linked together by a central stalk and a peripheral stalk. During catalysis, ATP synthesis in the catalytic domain of F(1) is coupled via a rotary mechanism of the central stalk subunits to proton translocation. In terms of biological role, component of the F(0) channel, it forms part of the peripheral stalk, linking F(1) to F(0). This chain is ATP synthase subunit b, found in Synechocystis sp. (strain ATCC 27184 / PCC 6803 / Kazusa).